A 238-amino-acid chain; its full sequence is Pyridoxine 5'-phosphate synthase (238 aa).

Asn-9 provides a ligand contact to 3-amino-2-oxopropyl phosphate. Position 11–12 (11–12) interacts with 1-deoxy-D-xylulose 5-phosphate; that stretch reads DH. Arg-20 is a 3-amino-2-oxopropyl phosphate binding site. Residue His-45 is the Proton acceptor of the active site. Arg-47 and His-52 together coordinate 1-deoxy-D-xylulose 5-phosphate. The active-site Proton acceptor is Glu-72. A 1-deoxy-D-xylulose 5-phosphate-binding site is contributed by Thr-102. His-189 acts as the Proton donor in catalysis. Residues Gly-190 and 211–212 contribute to the 3-amino-2-oxopropyl phosphate site; that span reads GH.

It belongs to the PNP synthase family. As to quaternary structure, homooctamer; tetramer of dimers.

It localises to the cytoplasm. It carries out the reaction 3-amino-2-oxopropyl phosphate + 1-deoxy-D-xylulose 5-phosphate = pyridoxine 5'-phosphate + phosphate + 2 H2O + H(+). Its pathway is cofactor biosynthesis; pyridoxine 5'-phosphate biosynthesis; pyridoxine 5'-phosphate from D-erythrose 4-phosphate: step 5/5. Catalyzes the complicated ring closure reaction between the two acyclic compounds 1-deoxy-D-xylulose-5-phosphate (DXP) and 3-amino-2-oxopropyl phosphate (1-amino-acetone-3-phosphate or AAP) to form pyridoxine 5'-phosphate (PNP) and inorganic phosphate. The polypeptide is Pyridoxine 5'-phosphate synthase (Ehrlichia ruminantium (strain Welgevonden)).